The chain runs to 202 residues: MSRYRGPRVRIIRRLGTLPGLTNKTSQLKSSSINQSISNKKISQYRIRLEEKQKLRFHYGITERQLLNYVRIARKAKGSTGEVLLQLLEMRSDNVIFRLGMAPTIPGARQLVNHRHILVNDCIVDIPSYRCKPQDFITIKNQRKSETMISKNIELYQKSKIPNHLTYSSLEKKGLVNQILDRESIGLKINELLVVEYYSRQA.

The 69-residue stretch at 90–158 folds into the S4 RNA-binding domain; it reads MRSDNVIFRL…ISKNIELYQK (69 aa).

Belongs to the universal ribosomal protein uS4 family. Part of the 30S ribosomal subunit. Contacts protein S5. The interaction surface between S4 and S5 is involved in control of translational fidelity.

The protein resides in the plastid. It is found in the chloroplast. Its function is as follows. One of the primary rRNA binding proteins, it binds directly to 16S rRNA where it nucleates assembly of the body of the 30S subunit. In terms of biological role, with S5 and S12 plays an important role in translational accuracy. In Exsertotheca crispa (Moss), this protein is Small ribosomal subunit protein uS4c (rps4).